Consider the following 101-residue polypeptide: Small ribosomal subunit protein uS14 (101 aa).

It belongs to the universal ribosomal protein uS14 family. Part of the 30S ribosomal subunit. Contacts proteins S3 and S10.

Functionally, binds 16S rRNA, required for the assembly of 30S particles and may also be responsible for determining the conformation of the 16S rRNA at the A site. In Vesicomyosocius okutanii subsp. Calyptogena okutanii (strain HA), this protein is Small ribosomal subunit protein uS14.